We begin with the raw amino-acid sequence, 200 residues long: 3-isopropylmalate dehydratase small subunit (200 aa).

This sequence belongs to the LeuD family. LeuD type 1 subfamily. Heterodimer of LeuC and LeuD.

It catalyses the reaction (2R,3S)-3-isopropylmalate = (2S)-2-isopropylmalate. It participates in amino-acid biosynthesis; L-leucine biosynthesis; L-leucine from 3-methyl-2-oxobutanoate: step 2/4. Catalyzes the isomerization between 2-isopropylmalate and 3-isopropylmalate, via the formation of 2-isopropylmaleate. This is 3-isopropylmalate dehydratase small subunit from Actinobacillus pleuropneumoniae serotype 3 (strain JL03).